The primary structure comprises 63 residues: Large ribosomal subunit protein uL29 (63 aa).

The protein belongs to the universal ribosomal protein uL29 family.

The sequence is that of Large ribosomal subunit protein uL29 from Shewanella loihica (strain ATCC BAA-1088 / PV-4).